Here is a 101-residue protein sequence, read N- to C-terminus: NADH-ubiquinone oxidoreductase chain 5 (101 aa).

Transmembrane regions (helical) follow at residues 12–32, 48–68, and 79–99; these read IALFTVFIIDIIKFYILSGVI, FLFITMGFLFFIFTTWYFICF, and LVIYFRYNLKYCLFFCMLFII.

The protein belongs to the complex I subunit 5 family.

The protein localises to the mitochondrion inner membrane. The enzyme catalyses a ubiquinone + NADH + 5 H(+)(in) = a ubiquinol + NAD(+) + 4 H(+)(out). Core subunit of the mitochondrial membrane respiratory chain NADH dehydrogenase (Complex I) that is believed to belong to the minimal assembly required for catalysis. Complex I functions in the transfer of electrons from NADH to the respiratory chain. The immediate electron acceptor for the enzyme is believed to be ubiquinone. In Leishmania tarentolae (Sauroleishmania tarentolae), this protein is NADH-ubiquinone oxidoreductase chain 5 (ND5).